Consider the following 130-residue polypeptide: Small ribosomal subunit protein uS9 (130 aa).

The protein belongs to the universal ribosomal protein uS9 family.

The protein is Small ribosomal subunit protein uS9 of Methylibium petroleiphilum (strain ATCC BAA-1232 / LMG 22953 / PM1).